Reading from the N-terminus, the 1178-residue chain is DNA-directed RNA polymerase subunit beta' (1178 aa).

Zn(2+) is bound by residues C60, C62, C75, and C78. Mg(2+) contacts are provided by D450, D452, and D454. Zn(2+) contacts are provided by C795, C869, C876, and C879.

This sequence belongs to the RNA polymerase beta' chain family. As to quaternary structure, the RNAP catalytic core consists of 2 alpha, 1 beta, 1 beta' and 1 omega subunit. When a sigma factor is associated with the core the holoenzyme is formed, which can initiate transcription. Requires Mg(2+) as cofactor. The cofactor is Zn(2+).

It carries out the reaction RNA(n) + a ribonucleoside 5'-triphosphate = RNA(n+1) + diphosphate. DNA-dependent RNA polymerase catalyzes the transcription of DNA into RNA using the four ribonucleoside triphosphates as substrates. This Clostridium botulinum (strain Langeland / NCTC 10281 / Type F) protein is DNA-directed RNA polymerase subunit beta'.